Here is a 744-residue protein sequence, read N- to C-terminus: Catalase-peroxidase (744 aa).

The tryptophyl-tyrosyl-methioninium (Trp-Tyr) (with M-257) cross-link spans 108 to 231 (WHSAGTYRIS…LAAVQMGLIY (124 aa)). His109 serves as the catalytic Proton acceptor. The segment at residues 231–257 (YVNPEGPNGNPDPIAAARDIRETFRRM) is a cross-link (tryptophyl-tyrosyl-methioninium (Tyr-Met) (with W-108)). His272 provides a ligand contact to heme b. A disordered region spans residues 353 to 372 (ANQWKPKDGAGAGTVPDAHD).

It belongs to the peroxidase family. Peroxidase/catalase subfamily. In terms of assembly, homodimer or homotetramer. Requires heme b as cofactor. Post-translationally, formation of the three residue Trp-Tyr-Met cross-link is important for the catalase, but not the peroxidase activity of the enzyme.

The catalysed reaction is H2O2 + AH2 = A + 2 H2O. The enzyme catalyses 2 H2O2 = O2 + 2 H2O. In terms of biological role, bifunctional enzyme with both catalase and broad-spectrum peroxidase activity. This chain is Catalase-peroxidase, found in Frankia casuarinae (strain DSM 45818 / CECT 9043 / HFP020203 / CcI3).